A 640-amino-acid chain; its full sequence is DNA mismatch repair protein MutL (640 aa).

Disordered regions lie at residues 332–353 (PNVQ…FNFP) and 408–431 (PAHT…TFHD).

The protein belongs to the DNA mismatch repair MutL/HexB family.

This protein is involved in the repair of mismatches in DNA. It is required for dam-dependent methyl-directed DNA mismatch repair. May act as a 'molecular matchmaker', a protein that promotes the formation of a stable complex between two or more DNA-binding proteins in an ATP-dependent manner without itself being part of a final effector complex. In Chloroherpeton thalassium (strain ATCC 35110 / GB-78), this protein is DNA mismatch repair protein MutL.